A 154-amino-acid polypeptide reads, in one-letter code: MutT-like protein (154 aa).

Residues 15 to 136 (PLHSVSVAGV…YAIRLLDALD (122 aa)) enclose the Nudix hydrolase domain. Mg(2+) is bound by residues glycine 48, glutamate 63, glutamate 66, and glutamate 67. The short motif at 48-69 (GVLELDETPETGVAREVWEETG) is the Nudix box element.

It belongs to the Nudix hydrolase family.

In Streptomyces ambofaciens, this protein is MutT-like protein.